A 348-amino-acid polypeptide reads, in one-letter code: Protein DMR6-LIKE OXYGENASE 2 (348 aa).

Residues 194-294 enclose the Fe2OG dioxygenase domain; sequence KHGQHMAINY…RISIPTFYCP (101 aa). Fe cation-binding residues include H219, D221, and H275. R285 lines the 2-oxoglutarate pocket.

Belongs to the iron/ascorbate-dependent oxidoreductase family. The cofactor is Fe(2+).

It carries out the reaction salicylate + NADH + O2 + H(+) = 2,3-dihydroxybenzoate + NAD(+) + H2O. Functionally, converts salicylic acid (SA) to 2,3-dihydroxybenzoic acid (2,3-DHBA). Negative regulator of defense against Hyaloperonospora arabidopsidis. Its function is as follows. (Microbial infection) Confers susceptibility to the downy mildew pathogen Hyaloperonospora arabidopsidis. This chain is Protein DMR6-LIKE OXYGENASE 2, found in Arabidopsis thaliana (Mouse-ear cress).